A 332-amino-acid polypeptide reads, in one-letter code: MRLLVLLWGCLLLPGYEALEGPEEISGFEGDTVSLQCTYREELRDHRKYWCRKGGILFSRCSGTIYAEEEGQETMKGRVSIRDSRQELSLIVTLWNLTLQDAGEYWCGVEKRGPDESLLISLFVFPGPCCPPSPSPTFQPLATTRLQPKAKAQQTQPPGLTSPGLYPAATTAKQGKTGAEAPPLPGTSQYGHERTSQYTGTSPHPATSPPAGSSRPPMQLDSTSAEDTSPALSSGSSKPRVSIPMVRILAPVLVLLSLLSAAGLIAFCSHLLLWRKEAQQATETQRNEKFCLSRLTAEEKEAPSQAPEGDVISMPPLHTSEEELGFSKFVSA.

The signal sequence occupies residues 1–18 (MRLLVLLWGCLLLPGYEA). One can recognise an Ig-like V-type domain in the interval 19 to 121 (LEGPEEISGF…RGPDESLLIS (103 aa)). The Extracellular segment spans residues 19–247 (LEGPEEISGF…KPRVSIPMVR (229 aa)). An intrachain disulfide couples Cys-37 to Cys-107. Asn-96 carries an N-linked (GlcNAc...) asparagine glycan. Thr-137, Thr-143, Thr-144, Thr-155, Thr-161, Thr-170, Thr-171, Thr-177, Thr-187, and Thr-195 each carry an O-linked (GalNAc...) threonine glycan. The disordered stretch occupies residues 146–239 (LQPKAKAQQT…PALSSGSSKP (94 aa)). Positions 147–158 (QPKAKAQQTQPP) are enriched in low complexity. Low complexity predominate over residues 168-181 (AATTAKQGKTGAEA). Over residues 186–205 (GTSQYGHERTSQYTGTSPHP) the composition is skewed to polar residues. Residue Ser-196 is glycosylated (O-linked (GalNAc...) serine). Thr-199 and Thr-201 each carry an O-linked (GalNAc...) threonine glycan. O-linked (GalNAc...) serine glycosylation is present at Ser-202. Thr-207 carries O-linked (GalNAc...) threonine glycosylation. O-linked (GalNAc...) serine glycans are attached at residues Ser-208, Ser-213, Ser-214, and Ser-222. The span at 220–239 (LDSTSAEDTSPALSSGSSKP) shows a compositional bias: polar residues. Thr-223 carries O-linked (GalNAc...) threonine glycosylation. Ser-224 is a glycosylation site (O-linked (GalNAc...) serine). O-linked (GalNAc...) threonine glycosylation occurs at Thr-228. Ser-229 and Ser-237 each carry an O-linked (GalNAc...) serine glycan. The helical transmembrane segment at 248 to 268 (ILAPVLVLLSLLSAAGLIAFC) threads the bilayer. The Cytoplasmic portion of the chain corresponds to 269-332 (SHLLLWRKEA…ELGFSKFVSA (64 aa)).

Belongs to the CD300 family. Post-translationally, O-glycosylated with sialylated oligosaccharides. Highly expressed in heart, skeletal muscle and placenta.

It localises to the apical cell membrane. The protein localises to the basolateral cell membrane. Its subcellular location is the endosome. The protein resides in the multivesicular body membrane. Functionally, receptor which may mediate L-selectin-dependent lymphocyte rollings. Binds SELL in a calcium dependent manner. Binds lymphocyte. The protein is CMRF35-like molecule 9 (CD300LG) of Homo sapiens (Human).